Here is a 171-residue protein sequence, read N- to C-terminus: Large ribosomal subunit protein uL10 (171 aa).

It belongs to the universal ribosomal protein uL10 family. Part of the ribosomal stalk of the 50S ribosomal subunit. The N-terminus interacts with L11 and the large rRNA to form the base of the stalk. The C-terminus forms an elongated spine to which L12 dimers bind in a sequential fashion forming a multimeric L10(L12)X complex.

Functionally, forms part of the ribosomal stalk, playing a central role in the interaction of the ribosome with GTP-bound translation factors. The chain is Large ribosomal subunit protein uL10 from Corynebacterium jeikeium (strain K411).